The sequence spans 368 residues: 4-hydroxy-3-methylbut-2-en-1-yl diphosphate synthase (flavodoxin) (368 aa).

[4Fe-4S] cluster is bound by residues Cys-268, Cys-271, Cys-303, and Glu-310.

Belongs to the IspG family. The cofactor is [4Fe-4S] cluster.

The catalysed reaction is (2E)-4-hydroxy-3-methylbut-2-enyl diphosphate + oxidized [flavodoxin] + H2O + 2 H(+) = 2-C-methyl-D-erythritol 2,4-cyclic diphosphate + reduced [flavodoxin]. The protein operates within isoprenoid biosynthesis; isopentenyl diphosphate biosynthesis via DXP pathway; isopentenyl diphosphate from 1-deoxy-D-xylulose 5-phosphate: step 5/6. In terms of biological role, converts 2C-methyl-D-erythritol 2,4-cyclodiphosphate (ME-2,4cPP) into 1-hydroxy-2-methyl-2-(E)-butenyl 4-diphosphate. This Listeria monocytogenes serotype 4b (strain F2365) protein is 4-hydroxy-3-methylbut-2-en-1-yl diphosphate synthase (flavodoxin).